A 357-amino-acid polypeptide reads, in one-letter code: Heat-inducible transcription repressor HrcA (357 aa).

The protein belongs to the HrcA family.

Negative regulator of class I heat shock genes (grpE-dnaK-dnaJ and groELS operons). Prevents heat-shock induction of these operons. This is Heat-inducible transcription repressor HrcA from Chlorobium phaeovibrioides (strain DSM 265 / 1930) (Prosthecochloris vibrioformis (strain DSM 265)).